A 270-amino-acid chain; its full sequence is MRIALGVQYDGAAFCGWQAQPHGKTVQDALERALGEFACVPLHTTVAGRTDTGVHGLGQVVHFDTALDRAEFSWVRGTNAFLPPTVSVQWAKAMPDTFHARFSAFERTYYYALYVHPVRSPMLAGRAGWIHTPLDDDAMRAAAVHLIGEHDFSSFRSSECQSKTPVKHLYQIDVRRSGHFIHFRFRANAFLHHMVRNLMGCLVAVGRGRYPADWLADVLAGRDRNLAAPTFMADGLYLAHVGYPAEFAVPPAQLGSVPWSSVWADLDPQP.

The Nucleophile role is filled by D51. Position 109 (Y109) interacts with substrate.

It belongs to the tRNA pseudouridine synthase TruA family. Homodimer.

The enzyme catalyses uridine(38/39/40) in tRNA = pseudouridine(38/39/40) in tRNA. In terms of biological role, formation of pseudouridine at positions 38, 39 and 40 in the anticodon stem and loop of transfer RNAs. The protein is tRNA pseudouridine synthase A of Burkholderia vietnamiensis (strain G4 / LMG 22486) (Burkholderia cepacia (strain R1808)).